A 440-amino-acid polypeptide reads, in one-letter code: Signal recognition particle 54 kDa protein (440 aa).

GTP contacts are provided by residues 104–111 (GLQGSGKT), 184–188 (DTAGR), and 242–245 (TKLD).

It belongs to the GTP-binding SRP family. SRP54 subfamily. In terms of assembly, part of the signal recognition particle protein translocation system, which is composed of SRP and FtsY. Archaeal SRP consists of a 7S RNA molecule of 300 nucleotides and two protein subunits: SRP54 and SRP19.

The protein resides in the cytoplasm. The catalysed reaction is GTP + H2O = GDP + phosphate + H(+). Involved in targeting and insertion of nascent membrane proteins into the cytoplasmic membrane. Binds to the hydrophobic signal sequence of the ribosome-nascent chain (RNC) as it emerges from the ribosomes. The SRP-RNC complex is then targeted to the cytoplasmic membrane where it interacts with the SRP receptor FtsY. The sequence is that of Signal recognition particle 54 kDa protein from Methanosarcina acetivorans (strain ATCC 35395 / DSM 2834 / JCM 12185 / C2A).